Consider the following 252-residue polypeptide: GTP cyclohydrolase 1 type 2 homolog (252 aa).

5 residues coordinate a divalent metal cation: histidine 65, histidine 66, aspartate 103, histidine 220, and glutamate 224.

This sequence belongs to the GTP cyclohydrolase I type 2/NIF3 family. As to quaternary structure, homohexamer.

This is GTP cyclohydrolase 1 type 2 homolog from Pseudomonas aeruginosa (strain ATCC 15692 / DSM 22644 / CIP 104116 / JCM 14847 / LMG 12228 / 1C / PRS 101 / PAO1).